Reading from the N-terminus, the 261-residue chain is Small ribosomal subunit protein eS1A (261 aa).

A compositionally biased stretch (basic residues) spans 1–18; it reads MTLGKNKRISKGGKRGKK. Residues 1-23 form a disordered region; the sequence is MTLGKNKRISKGGKRGKKKTQET.

The protein belongs to the eukaryotic ribosomal protein eS1 family. In terms of assembly, component of the small ribosomal subunit. Mature ribosomes consist of a small (40S) and a large (60S) subunit. The 40S subunit contains about 33 different proteins and 1 molecule of RNA (18S). The 60S subunit contains about 49 different proteins and 3 molecules of RNA (25S, 5.8S and 5S).

It is found in the cytoplasm. This is Small ribosomal subunit protein eS1A from Trypanosoma cruzi (strain CL Brener).